The primary structure comprises 192 residues: ATP synthase subunit b (192 aa).

Residues 7–27 (LLLVLGVMLLATGVALAAGGE) traverse the membrane as a helical segment.

It belongs to the ATPase B chain family. In terms of assembly, F-type ATPases have 2 components, F(1) - the catalytic core - and F(0) - the membrane proton channel. F(1) has five subunits: alpha(3), beta(3), gamma(1), delta(1), epsilon(1). F(0) has three main subunits: a(1), b(2) and c(10-14). The alpha and beta chains form an alternating ring which encloses part of the gamma chain. F(1) is attached to F(0) by a central stalk formed by the gamma and epsilon chains, while a peripheral stalk is formed by the delta and b chains.

The protein localises to the cell inner membrane. F(1)F(0) ATP synthase produces ATP from ADP in the presence of a proton or sodium gradient. F-type ATPases consist of two structural domains, F(1) containing the extramembraneous catalytic core and F(0) containing the membrane proton channel, linked together by a central stalk and a peripheral stalk. During catalysis, ATP synthesis in the catalytic domain of F(1) is coupled via a rotary mechanism of the central stalk subunits to proton translocation. Its function is as follows. Component of the F(0) channel, it forms part of the peripheral stalk, linking F(1) to F(0). The protein is ATP synthase subunit b of Oleidesulfovibrio alaskensis (strain ATCC BAA-1058 / DSM 17464 / G20) (Desulfovibrio alaskensis).